We begin with the raw amino-acid sequence, 376 residues long: Glutamate 5-kinase (376 aa).

Lys-15 contacts ATP. Residues Ser-56, Asp-143, and Asn-155 each coordinate substrate. Residue 175-176 (SD) participates in ATP binding. In terms of domain architecture, PUA spans 281 to 358 (KGTLTIDAGA…PDVMSILGIT (78 aa)).

Belongs to the glutamate 5-kinase family.

The protein localises to the cytoplasm. It carries out the reaction L-glutamate + ATP = L-glutamyl 5-phosphate + ADP. It participates in amino-acid biosynthesis; L-proline biosynthesis; L-glutamate 5-semialdehyde from L-glutamate: step 1/2. Catalyzes the transfer of a phosphate group to glutamate to form L-glutamate 5-phosphate. The sequence is that of Glutamate 5-kinase from Rhodopseudomonas palustris (strain BisB18).